The primary structure comprises 62 residues: Photosystem II reaction center protein Z (62 aa).

Helical transmembrane passes span Leu-8–Ser-28 and Val-41–Val-61.

This sequence belongs to the PsbZ family. As to quaternary structure, PSII is composed of 1 copy each of membrane proteins PsbA, PsbB, PsbC, PsbD, PsbE, PsbF, PsbH, PsbI, PsbJ, PsbK, PsbL, PsbM, PsbT, PsbX, PsbY, PsbZ, Psb30/Ycf12, at least 3 peripheral proteins of the oxygen-evolving complex and a large number of cofactors. It forms dimeric complexes.

Its subcellular location is the plastid. It is found in the chloroplast thylakoid membrane. In terms of biological role, may control the interaction of photosystem II (PSII) cores with the light-harvesting antenna, regulates electron flow through the 2 photosystem reaction centers. PSII is a light-driven water plastoquinone oxidoreductase, using light energy to abstract electrons from H(2)O, generating a proton gradient subsequently used for ATP formation. The polypeptide is Photosystem II reaction center protein Z (Cyanidioschyzon merolae (strain NIES-3377 / 10D) (Unicellular red alga)).